The following is a 413-amino-acid chain: RING-H2 finger protein ATL54 (413 aa).

The helical transmembrane segment at 83 to 103 (ISIITITGAVLAILLTGFFLV) threads the bilayer. An RING-type; atypical zinc finger spans residues 177–219 (CPVCLNEFEEDESLRLLPKCNHAFHISCIDTWLSSHTNCPLCR). 2 disordered regions span residues 238–258 (VTPGGSGSHLENDGVDEEDHG) and 321–413 (THVE…VFPL). The segment covering 387–401 (SSSTLKTNGSSSSVS) has biased composition (low complexity). The span at 402–413 (CFNKNKSSVFPL) shows a compositional bias: polar residues.

It belongs to the RING-type zinc finger family. ATL subfamily.

The protein resides in the membrane. The catalysed reaction is S-ubiquitinyl-[E2 ubiquitin-conjugating enzyme]-L-cysteine + [acceptor protein]-L-lysine = [E2 ubiquitin-conjugating enzyme]-L-cysteine + N(6)-ubiquitinyl-[acceptor protein]-L-lysine.. It participates in protein modification; protein ubiquitination. The sequence is that of RING-H2 finger protein ATL54 (ATL54) from Arabidopsis thaliana (Mouse-ear cress).